A 241-amino-acid chain; its full sequence is Large ribosomal subunit protein eL32 (241 aa).

Residues 1-16 (MADNEEDVEAEEEYTE) are compositionally biased toward acidic residues. Disordered stretches follow at residues 1–47 (MADN…GADQ) and 68–182 (VGGL…HPSG). Positions 29 to 44 (ESLREAGFESVEDVRG) are enriched in basic and acidic residues. Over residues 73 to 96 (VESETEAEVEEEGGEEAPDEDVET) the composition is skewed to acidic residues. Basic and acidic residues predominate over residues 103–116 (LTEKTPDLSDEDAR). A compositionally biased stretch (basic residues) spans 133-159 (DHHKKKRVSTSWRKPRGQLSKQRRGIK).

This sequence belongs to the eukaryotic ribosomal protein eL32 family. Part of the 50S ribosomal subunit. Interacts weakly with protein L15.

Functionally, binds to the 23S rRNA. This Haloarcula marismortui (strain ATCC 43049 / DSM 3752 / JCM 8966 / VKM B-1809) (Halobacterium marismortui) protein is Large ribosomal subunit protein eL32 (rpl32e).